We begin with the raw amino-acid sequence, 246 residues long: Small ribosomal subunit protein uS2 (246 aa).

Belongs to the universal ribosomal protein uS2 family.

The sequence is that of Small ribosomal subunit protein uS2 from Pseudomonas paraeruginosa (strain DSM 24068 / PA7) (Pseudomonas aeruginosa (strain PA7)).